Reading from the N-terminus, the 1113-residue chain is Carbamoyl phosphate synthase large chain (1113 aa).

Residues 1–407 are carboxyphosphate synthetic domain; the sequence is MPKRSDINHV…ALNKALRSLE (407 aa). ATP is bound by residues Arg-134, Arg-174, Gly-180, Gly-181, Glu-213, Ile-215, Glu-220, Gly-246, Val-247, His-248, Gln-290, and Glu-304. The 196-residue stretch at 138-333 folds into the ATP-grasp 1 domain; it reads KDIVTTIGGE…IAKMAAKLAI (196 aa). The Mg(2+) site is built by Gln-290, Glu-304, and Asn-306. Gln-290, Glu-304, and Asn-306 together coordinate Mn(2+). Positions 408 to 565 are oligomerization domain; the sequence is TKQQGFWTKP…ELDPAAESEV (158 aa). The carbamoyl phosphate synthetic domain stretch occupies residues 566-967; it reads APQTEREKVL…AYAKAEAGAF (402 aa). Residues 695 to 886 form the ATP-grasp 2 domain; it reads GALLNREQLP…LAKAASRIAV (192 aa). ATP-binding residues include Arg-731, Arg-770, Leu-772, Glu-777, Gly-802, Ile-803, His-804, Ser-805, Gln-845, and Glu-857. Mg(2+) is bound by residues Gln-845, Glu-857, and Asn-859. Residues Gln-845, Glu-857, and Asn-859 each coordinate Mn(2+). Residues 968–1113 enclose the MGS-like domain; the sequence is GALPTEGTVF…LQELDHAVKA (146 aa). An allosteric domain region spans residues 968–1113; that stretch reads GALPTEGTVF…LQELDHAVKA (146 aa).

It belongs to the CarB family. In terms of assembly, composed of two chains; the small (or glutamine) chain promotes the hydrolysis of glutamine to ammonia, which is used by the large (or ammonia) chain to synthesize carbamoyl phosphate. Tetramer of heterodimers (alpha,beta)4. Mg(2+) is required as a cofactor. Mn(2+) serves as cofactor.

The catalysed reaction is hydrogencarbonate + L-glutamine + 2 ATP + H2O = carbamoyl phosphate + L-glutamate + 2 ADP + phosphate + 2 H(+). It catalyses the reaction hydrogencarbonate + NH4(+) + 2 ATP = carbamoyl phosphate + 2 ADP + phosphate + 2 H(+). The protein operates within amino-acid biosynthesis; L-arginine biosynthesis; carbamoyl phosphate from bicarbonate: step 1/1. It participates in pyrimidine metabolism; UMP biosynthesis via de novo pathway; (S)-dihydroorotate from bicarbonate: step 1/3. Functionally, large subunit of the glutamine-dependent carbamoyl phosphate synthetase (CPSase). CPSase catalyzes the formation of carbamoyl phosphate from the ammonia moiety of glutamine, carbonate, and phosphate donated by ATP, constituting the first step of 2 biosynthetic pathways, one leading to arginine and/or urea and the other to pyrimidine nucleotides. The large subunit (synthetase) binds the substrates ammonia (free or transferred from glutamine from the small subunit), hydrogencarbonate and ATP and carries out an ATP-coupled ligase reaction, activating hydrogencarbonate by forming carboxy phosphate which reacts with ammonia to form carbamoyl phosphate. This Corynebacterium glutamicum (strain ATCC 13032 / DSM 20300 / JCM 1318 / BCRC 11384 / CCUG 27702 / LMG 3730 / NBRC 12168 / NCIMB 10025 / NRRL B-2784 / 534) protein is Carbamoyl phosphate synthase large chain.